Here is a 575-residue protein sequence, read N- to C-terminus: Serine/threonine-protein phosphatase 2A regulatory subunit B'' subunit beta (575 aa).

Residues 41–131 are disordered; sequence APGRDQPTPG…SQSIPTFYFP (91 aa). The 36-residue stretch at 388-423 folds into the EF-hand domain; that stretch reads KTPTSIEYWFRCMDLDGDGALSMFELEYFYEEQCRR. Residues Asp401, Asp403, Asp405, and Glu412 each contribute to the Ca(2+) site.

In terms of assembly, PP2A consists of a common heterodimeric core enzyme, composed of a 36 kDa catalytic subunit (subunit C) and a 65 kDa constant regulatory subunit (PR65 or subunit A), that associates with a variety of regulatory subunits. Proteins that associate with the core dimer include three families of regulatory subunits B (the R2/B/PR55/B55, R3/B''/PR72/PR130/PR59 and R5/B'/B56 families), the 48 kDa variable regulatory subunit, viral proteins, and cell signaling molecules. Interacts with N-terminal region of CDC6. Interacts with NOD2.

Its subcellular location is the nucleus. Its function is as follows. The B regulatory subunit might modulate substrate selectivity and catalytic activity, and might also direct the localization of the catalytic enzyme to a particular subcellular compartment. This Homo sapiens (Human) protein is Serine/threonine-protein phosphatase 2A regulatory subunit B'' subunit beta (PPP2R3B).